We begin with the raw amino-acid sequence, 689 residues long: Glycine--tRNA ligase beta subunit (689 aa).

The protein belongs to the class-II aminoacyl-tRNA synthetase family. Tetramer of two alpha and two beta subunits.

It is found in the cytoplasm. It catalyses the reaction tRNA(Gly) + glycine + ATP = glycyl-tRNA(Gly) + AMP + diphosphate. This chain is Glycine--tRNA ligase beta subunit, found in Shewanella putrefaciens (strain CN-32 / ATCC BAA-453).